The chain runs to 727 residues: Non-structural protein 4 (727 aa).

2 disordered regions span residues 1–38 (MNQS…PSEG) and 671–727 (GNSM…KLSK). The span at 17-38 (RTPSALSSNSETPGSMSSPSEG) shows a compositional bias: polar residues. Residues 712–727 (SRRKARKARAASKLSK) show a composition bias toward basic residues.

In Rice dwarf virus (isolate Fujian) (RDV), this protein is Non-structural protein 4.